The following is a 457-amino-acid chain: Bifunctional protein GlmU (457 aa).

A pyrophosphorylase region spans residues 1–230 (MSKRYAVVLA…FEESLGVNDR (230 aa)). Residues 9–12 (LAAG), K23, Q73, and 78–79 (GT) each bind UDP-N-acetyl-alpha-D-glucosamine. D103 serves as a coordination point for Mg(2+). 4 residues coordinate UDP-N-acetyl-alpha-D-glucosamine: G140, E155, N170, and N228. Position 228 (N228) interacts with Mg(2+). Residues 231 to 251 (IALAEASRLMQRRINENHMRN) are linker. Residues 252 to 457 (GVTLVNPENT…GYAKHLNHGK (206 aa)) form an N-acetyltransferase region. Residues R333 and K351 each contribute to the UDP-N-acetyl-alpha-D-glucosamine site. Residue H363 is the Proton acceptor of the active site. UDP-N-acetyl-alpha-D-glucosamine-binding residues include Y366 and N377. Residues 386–387 (NY), A423, and R440 each bind acetyl-CoA.

In the N-terminal section; belongs to the N-acetylglucosamine-1-phosphate uridyltransferase family. This sequence in the C-terminal section; belongs to the transferase hexapeptide repeat family. In terms of assembly, homotrimer. The cofactor is Mg(2+).

It is found in the cytoplasm. It carries out the reaction alpha-D-glucosamine 1-phosphate + acetyl-CoA = N-acetyl-alpha-D-glucosamine 1-phosphate + CoA + H(+). It catalyses the reaction N-acetyl-alpha-D-glucosamine 1-phosphate + UTP + H(+) = UDP-N-acetyl-alpha-D-glucosamine + diphosphate. It functions in the pathway nucleotide-sugar biosynthesis; UDP-N-acetyl-alpha-D-glucosamine biosynthesis; N-acetyl-alpha-D-glucosamine 1-phosphate from alpha-D-glucosamine 6-phosphate (route II): step 2/2. Its pathway is nucleotide-sugar biosynthesis; UDP-N-acetyl-alpha-D-glucosamine biosynthesis; UDP-N-acetyl-alpha-D-glucosamine from N-acetyl-alpha-D-glucosamine 1-phosphate: step 1/1. The protein operates within bacterial outer membrane biogenesis; LPS lipid A biosynthesis. In terms of biological role, catalyzes the last two sequential reactions in the de novo biosynthetic pathway for UDP-N-acetylglucosamine (UDP-GlcNAc). The C-terminal domain catalyzes the transfer of acetyl group from acetyl coenzyme A to glucosamine-1-phosphate (GlcN-1-P) to produce N-acetylglucosamine-1-phosphate (GlcNAc-1-P), which is converted into UDP-GlcNAc by the transfer of uridine 5-monophosphate (from uridine 5-triphosphate), a reaction catalyzed by the N-terminal domain. The polypeptide is Bifunctional protein GlmU (Listeria monocytogenes serotype 4b (strain CLIP80459)).